The sequence spans 1112 residues: cGMP-inhibited 3',5'-cyclic phosphodiesterase 3B (1112 aa).

Residues 1–10 show a composition bias toward basic and acidic residues; sequence MRRDERDAKA. The interaction with RAPGEF3 stretch occupies residues 1 to 25; the sequence is MRRDERDAKAMRSLQPPDGAGSPPE. The tract at residues 1-26 is disordered; the sequence is MRRDERDAKAMRSLQPPDGAGSPPES. S13 is modified (phosphoserine). Helical transmembrane passes span 88 to 108, 117 to 137, 152 to 172, 192 to 212, 220 to 240, and 247 to 267; these read FVLALLLGAEPESWAAGAAWL, HSLSPLFSIACAFFFLTCFLT, WWLLALPACCYLGDFLVWQWW, AAAGRLLLVLSCVGLLLTLAH, VLVLLLASFVWWVSFTSLGSL, and LLSGLVGGAGCLLALGLDHFF. S295 is modified (phosphoserine; by PKB/AKT1 or PKB/AKT2). S296 and S442 each carry phosphoserine. A disordered region spans residues 418 to 471; sequence EKGDRKLNKGLNRNSLPTPQLRRSSGTSGLLPVEQSSRWDRNNGKRPHQEFGIS. Residues 428–445 show a composition bias toward polar residues; the sequence is LNRNSLPTPQLRRSSGTS. The tract at residues 436–460 is interaction with PIK3R6; that stretch reads PQLRRSSGTSGLLPVEQSSRWDRNN. Residues 454-466 are compositionally biased toward basic and acidic residues; sequence SRWDRNNGKRPHQ. The region spanning 651–1079 is the PDEase domain; it reads TNIEQEVSLD…KIWKEIVEEE (429 aa). H737 serves as the catalytic Proton donor. Position 737 (H737) interacts with AMP. The Mg(2+) site is built by H741, H821, D822, and D937. AMP-binding residues include D822, D937, and Q988. Composition is skewed to acidic residues over residues 1017–1041 and 1103–1112; these read EEDNDTESGDDEDGEELDTEDEEME and QVIEEADEEE. 2 disordered regions span residues 1017-1051 and 1092-1112; these read EEDNDTESGDDEDGEELDTEDEEMENNLNPKPPRR and ENSSLPQADEIQVIEEADEEE.

Belongs to the cyclic nucleotide phosphodiesterase family. PDE3 subfamily. Homodimer. Interacts with PIK3CG; regulates PDE3B activity and thereby cAMP levels in cells. Interacts with RAPGEF3 and PIK3R6; form a signaling complex that regulates phosphatidylinositol 3-kinase gamma in angiogenesis. Interacts with ABHD15; this interaction regulates PDE3B's stability and expression and, thereby, impacts the antilipolytic action of insulin. The cofactor is Mg(2+). Mn(2+) is required as a cofactor. Phosphorylation at Ser-295 mediates insulin-induced activation of PDE3B. In terms of tissue distribution, abundant in adipose tissues.

The protein localises to the membrane. It catalyses the reaction a nucleoside 3',5'-cyclic phosphate + H2O = a nucleoside 5'-phosphate + H(+). The catalysed reaction is 3',5'-cyclic AMP + H2O = AMP + H(+). The enzyme catalyses 3',5'-cyclic GMP + H2O = GMP + H(+). Inhibited by cGMP. In terms of biological role, cyclic nucleotide phosphodiesterase with a dual-specificity for the second messengers cAMP and cGMP, which are key regulators of many important physiological process. Regulates angiogenesis by inhibiting the cAMP-dependent guanine nucleotide exchange factor RAPGEF3 and downstream phosphatidylinositol 3-kinase gamma-mediated signaling. Controls cardiac contractility by reducing cAMP concentration in cardiocytes. The sequence is that of cGMP-inhibited 3',5'-cyclic phosphodiesterase 3B from Homo sapiens (Human).